A 512-amino-acid polypeptide reads, in one-letter code: Protein maph-9 (512 aa).

Disordered regions lie at residues 24–103 (ISRK…DDDF), 168–386 (DLSE…KNEK), and 481–512 (GNRL…RPFR). 2 stretches are compositionally biased toward low complexity: residues 30 to 39 (TTTTSSGSSG) and 78 to 95 (STLS…STAA). The segment covering 178–200 (TDHEDPSLTFRVDKELEQSESKK) has biased composition (basic and acidic residues). Residues 230 to 239 (PQTSANLSTK) show a composition bias toward polar residues. Composition is skewed to basic and acidic residues over residues 260-302 (KPSD…RENS) and 310-386 (VQDH…KNEK). A coiled-coil region spans residues 267-429 (KEWLQKKERE…QLEESEKMTR (163 aa)). Residues 502-512 (PGTTTSLRPFR) are compositionally biased toward polar residues.

Expressed in amphid and phasmid ciliated neurons.

The protein resides in the cell projection. It localises to the cilium. Its subcellular location is the cytoplasm. It is found in the cytoskeleton. The protein localises to the cilium axoneme. This chain is Protein maph-9, found in Caenorhabditis elegans.